We begin with the raw amino-acid sequence, 145 residues long: Early nodulin-like protein 21 (145 aa).

Positions 1-17 (MFLWLVIVLTISASVSS) are cleaved as a signal peptide. Positions 18-116 (YEHKLNWVVP…GQKMIVEVIS (99 aa)) constitute a Phytocyanin domain. Residues asparagine 30 and asparagine 71 are each glycosylated (N-linked (GlcNAc...) asparagine). Cysteines 70 and 104 form a disulfide. Residue serine 116 is the site of GPI-anchor amidated serine attachment. Residues 117–145 (RDHTTTSAAPPAAFAVLLCFFSLSLYFVA) constitute a propeptide, removed in mature form.

The protein belongs to the early nodulin-like (ENODL) family. Mostly expressed in leaves and flowers, and, to a lower extent, in roots and stems, but barely in seedlings and seeds.

The protein localises to the cell membrane. Functionally, may act as a carbohydrate transporter. The chain is Early nodulin-like protein 21 from Arabidopsis thaliana (Mouse-ear cress).